The following is a 448-amino-acid chain: uncharacterized protein (448 aa).

Residues 4–155 (QAIVLATFDA…SAVNLEFDSL (152 aa)) form the uDENN domain. Residues 183-326 (LDHLGPAFYC…FKGLSRYLSF (144 aa)) form the cDENN domain. Positions 328-428 (GESSWGLTTY…WQYGKYFWLR (101 aa)) constitute a dDENN domain. The chain crosses the membrane as a helical span at residues 425 to 447 (FWLRRVSLIFLASTCFLFILWKL).

The protein localises to the golgi apparatus membrane. Its subcellular location is the endoplasmic reticulum membrane. This is an uncharacterized protein from Schizosaccharomyces pombe (strain 972 / ATCC 24843) (Fission yeast).